Reading from the N-terminus, the 593-residue chain is Aspartate--tRNA ligase (593 aa).

Position 173 (E173) interacts with L-aspartate. Residues 197–200 form an aspartate region; it reads QLFK. Position 219 (R219) interacts with L-aspartate. Residues 219-221 and Q228 contribute to the ATP site; that span reads RDE. An L-aspartate-binding site is contributed by H448. Residue E482 participates in ATP binding. An L-aspartate-binding site is contributed by R489. Residue 534–537 coordinates ATP; that stretch reads GLDR.

The protein belongs to the class-II aminoacyl-tRNA synthetase family. Type 1 subfamily. Homodimer.

It is found in the cytoplasm. It catalyses the reaction tRNA(Asp) + L-aspartate + ATP = L-aspartyl-tRNA(Asp) + AMP + diphosphate. Catalyzes the attachment of L-aspartate to tRNA(Asp) in a two-step reaction: L-aspartate is first activated by ATP to form Asp-AMP and then transferred to the acceptor end of tRNA(Asp). This is Aspartate--tRNA ligase from Shewanella denitrificans (strain OS217 / ATCC BAA-1090 / DSM 15013).